The sequence spans 754 residues: Cytosolic neutral trehalase (754 aa).

Residues 1-10 are compositionally biased toward polar residues; the sequence is MDGKVNNNPP. Disordered regions lie at residues 1 to 47 and 54 to 73; these read MDGK…LSKN and TFSV…YTSP. Positions 117, 119, 121, 123, and 128 each coordinate Ca(2+). Substrate is bound by residues Arg305, 312-313, Asn349, 358-360, Glu427, Arg476, and Gly479; these read WD and RSQ. Catalysis depends on proton donor/acceptor residues Asp481 and Glu676.

Belongs to the glycosyl hydrolase 37 family. It depends on Ca(2+) as a cofactor.

The protein resides in the cytoplasm. The catalysed reaction is alpha,alpha-trehalose + H2O = alpha-D-glucose + beta-D-glucose. The protein operates within carbohydrate degradation. Functionally, hydrolyzes intracellular trehalose to glucose. The disaccharide trehalose serves as a storage molecule for energy and carbohydrates that is mobilized during nutrient stress. The protein is Cytosolic neutral trehalase of Kluyveromyces lactis (strain ATCC 8585 / CBS 2359 / DSM 70799 / NBRC 1267 / NRRL Y-1140 / WM37) (Yeast).